The following is a 429-amino-acid chain: Glutamate-1-semialdehyde 2,1-aminomutase 2 (429 aa).

N6-(pyridoxal phosphate)lysine is present on K268.

Belongs to the class-III pyridoxal-phosphate-dependent aminotransferase family. HemL subfamily. As to quaternary structure, homodimer. Pyridoxal 5'-phosphate serves as cofactor.

The protein localises to the cytoplasm. It carries out the reaction (S)-4-amino-5-oxopentanoate = 5-aminolevulinate. It participates in porphyrin-containing compound metabolism; protoporphyrin-IX biosynthesis; 5-aminolevulinate from L-glutamyl-tRNA(Glu): step 2/2. In Staphylococcus aureus (strain MSSA476), this protein is Glutamate-1-semialdehyde 2,1-aminomutase 2.